A 100-amino-acid polypeptide reads, in one-letter code: Large ribosomal subunit protein bL28 (100 aa).

This sequence belongs to the bacterial ribosomal protein bL28 family.

The chain is Large ribosomal subunit protein bL28 from Ehrlichia ruminantium (strain Gardel).